The primary structure comprises 120 residues: Large ribosomal subunit protein bL20c (120 aa).

The protein belongs to the bacterial ribosomal protein bL20 family.

It localises to the plastid. Its function is as follows. Binds directly to 23S ribosomal RNA and is necessary for the in vitro assembly process of the 50S ribosomal subunit. It is not involved in the protein synthesizing functions of that subunit. This Cuscuta gronovii (Common dodder) protein is Large ribosomal subunit protein bL20c (rpl20).